The primary structure comprises 660 residues: Arginine--tRNA ligase, cytoplasmic (660 aa).

M1 is subject to N-acetylmethionine. The tract at residues 1 to 72 is could be involved in the assembly of the multisynthetase complex; it reads MDGLVAQCSA…QEERRKPTKN (72 aa). L-arginine contacts are provided by residues 200–202, H211, Y384, D388, and Q412; that span reads SPN. A 'HIGH' region motif is present at residues 201–212; it reads PNIAKEMHVGHL. An interaction with tRNA region spans residues 529–543; it reads NTAAYLLYAFTRIRS.

This sequence belongs to the class-I aminoacyl-tRNA synthetase family. As to quaternary structure, interacts (via N-terminus) with AIMP1 (via N-terminus); this stimulates its catalytic activity. Interacts (via N-terminus) with LARS2 (via C-terminus). Monomer. Part of a multisubunit complex that groups tRNA ligases for Arg (RARS1), Asp (DARS1), Gln (QARS1), Ile (IARS1), Leu (LARS1), Lys (KARS1), Met (MARS1) the bifunctional ligase for Glu and Pro (EPRS1) and the auxiliary subunits AIMP1/p43, AIMP2/p38 and EEF1E1/p18. Interacts with QARS1. Part of a complex composed of RARS1, QARS1 and AIMP1.

The protein localises to the cytoplasm. It localises to the cytosol. It catalyses the reaction tRNA(Arg) + L-arginine + ATP = L-arginyl-tRNA(Arg) + AMP + diphosphate. In terms of biological role, forms part of a macromolecular complex that catalyzes the attachment of specific amino acids to cognate tRNAs during protein synthesis. Modulates the secretion of AIMP1 and may be involved in generation of the inflammatory cytokine EMAP2 from AIMP1. This Mus musculus (Mouse) protein is Arginine--tRNA ligase, cytoplasmic (Rars1).